The following is a 103-amino-acid chain: Co-chaperonin GroES (103 aa).

It belongs to the GroES chaperonin family. Heptamer of 7 subunits arranged in a ring. Interacts with the chaperonin GroEL.

The protein resides in the cytoplasm. Its function is as follows. Together with the chaperonin GroEL, plays an essential role in assisting protein folding. The GroEL-GroES system forms a nano-cage that allows encapsulation of the non-native substrate proteins and provides a physical environment optimized to promote and accelerate protein folding. GroES binds to the apical surface of the GroEL ring, thereby capping the opening of the GroEL channel. The protein is Co-chaperonin GroES of Rippkaea orientalis (strain PCC 8801 / RF-1) (Cyanothece sp. (strain PCC 8801)).